The primary structure comprises 275 residues: Nitrate import permease protein NrtB (275 aa).

The next 7 membrane-spanning stretches (helical) occupy residues 25 to 45, 89 to 109, 120 to 140, 147 to 167, 189 to 209, 213 to 233, and 238 to 258; these read VIRP…LCSG, VAVG…LIGS, IFQV…LAAL, AIFV…TVGA, FFNI…RIGI, WLAI…FFIW, and SSLI…GLLL. One can recognise an ABC transmembrane type-1 domain in the interval 82 to 262; the sequence is IFASLTRVAV…IVGLLLDRFI (181 aa).

This sequence belongs to the binding-protein-dependent transport system permease family. CysTW subfamily. The complex is composed of two ATP-binding proteins (NrtC and NrtD), two transmembrane proteins (NrtB) and a solute-binding protein (NrtA).

The protein localises to the cell inner membrane. Its function is as follows. Part of the ABC transporter complex NrtABCD involved in nitrate uptake. The complex is probably also involved in nitrite transport. Probably responsible for the translocation of the substrate across the membrane. In Synechocystis sp. (strain ATCC 27184 / PCC 6803 / Kazusa), this protein is Nitrate import permease protein NrtB (nrtB).